The chain runs to 541 residues: Atlastin-3 (541 aa).

The N-terminal hypervariable region (HVR) stretch occupies residues 1-25 (MLSPQRVAAAASRGADDAMESSKPG). Residues 1–445 (MLSPQRVAAA…NVFSTFRTPA (445 aa)) are Cytoplasmic-facing. The GB1/RHD3-type G domain maps to 57–305 (DLDVVVVSVA…LIPYVLNPSK (249 aa)). Positions 70, 71, 72, 73, 74, 75, and 109 each coordinate GDP. Position 142 (Asp-142) interacts with Mg(2+). Positions 213, 214, 272, and 275 each coordinate GDP. Residues 343 to 434 (MLQATAEANN…YENFCKHNGS (92 aa)) are 3HB (three-helix bundle) domain. An N6-acetyllysine modification is found at Lys-391. The chain crosses the membrane as a helical span at residues 446–466 (VLFTGIVALYIASGLTGFIGL). Glu-467 is a topological domain (lumenal). Residues 468-488 (VVAQLFNCMVGLLLIALLTWG) traverse the membrane as a helical segment. The Cytoplasmic portion of the chain corresponds to 489-541 (YIRYSGQYRELGGAIDFGAAYVLEQASSHIGNSTQATVRDAVVGRPSMDKKAQ). Ser-535 bears the Phosphoserine mark.

The protein belongs to the TRAFAC class dynamin-like GTPase superfamily. GB1/RHD3 GTPase family. GB1 subfamily. As to quaternary structure, monomeric and homodimeric. The homodimer, transiently formed by two molecules on opposing membranes, is the active form mediating ER membrane fusion. Interacts with ZFYVE27; both proteins are involved in endoplasmic reticulum tubular network organization. Interacts with REEP5; both proteins are involved in endoplasmic reticulum tubular network organization. Expressed in the central nervous system and in dorsal root ganglia neurons. Expressed in peripheral tissues (at protein level).

Its subcellular location is the endoplasmic reticulum membrane. It catalyses the reaction GTP + H2O = GDP + phosphate + H(+). Functionally, atlastin-3 (ATL3) is a membrane-anchored GTPase that mediates the GTP-dependent fusion of endoplasmic reticulum (ER) membranes, maintaining the continuous ER network. It facilitates the formation of three-way junctions where ER tubules intersect. Two atlastin-3 on neighboring ER tubules bind GTP and form loose homodimers through the GB1/RHD3-type G domains and 3HB regions. Upon GTP hydrolysis, the 3HB regions tighten, pulling the membranes together to drive their fusion. After fusion, the homodimer disassembles upon release of inorganic phosphate (Pi). Subsequently, GDP dissociates, resetting the monomers to a conformation ready for a new fusion cycle. In Homo sapiens (Human), this protein is Atlastin-3.